The primary structure comprises 220 residues: Deoxyribose-phosphate aldolase (220 aa).

Residue Asp89 is the Proton donor/acceptor of the active site. Lys151 serves as the catalytic Schiff-base intermediate with acetaldehyde. Catalysis depends on Lys180, which acts as the Proton donor/acceptor.

Belongs to the DeoC/FbaB aldolase family. DeoC type 1 subfamily.

The protein resides in the cytoplasm. It catalyses the reaction 2-deoxy-D-ribose 5-phosphate = D-glyceraldehyde 3-phosphate + acetaldehyde. It functions in the pathway carbohydrate degradation; 2-deoxy-D-ribose 1-phosphate degradation; D-glyceraldehyde 3-phosphate and acetaldehyde from 2-deoxy-alpha-D-ribose 1-phosphate: step 2/2. In terms of biological role, catalyzes a reversible aldol reaction between acetaldehyde and D-glyceraldehyde 3-phosphate to generate 2-deoxy-D-ribose 5-phosphate. In Staphylococcus saprophyticus subsp. saprophyticus (strain ATCC 15305 / DSM 20229 / NCIMB 8711 / NCTC 7292 / S-41), this protein is Deoxyribose-phosphate aldolase.